The following is a 298-amino-acid chain: Ethanolamine ammonia-lyase small subunit (298 aa).

The adenosylcob(III)alamin site is built by V210, E231, and C261.

The protein belongs to the EutC family. In terms of assembly, the basic unit is a heterodimer which dimerizes to form tetramers. The heterotetramers trimerize; 6 large subunits form a core ring with 6 small subunits projecting outwards. Adenosylcob(III)alamin serves as cofactor.

It localises to the bacterial microcompartment. It catalyses the reaction ethanolamine = acetaldehyde + NH4(+). Its pathway is amine and polyamine degradation; ethanolamine degradation. Catalyzes the deamination of various vicinal amino-alcohols to oxo compounds. Allows this organism to utilize ethanolamine as the sole source of nitrogen and carbon in the presence of external vitamin B12. The protein is Ethanolamine ammonia-lyase small subunit of Salmonella schwarzengrund (strain CVM19633).